A 155-amino-acid polypeptide reads, in one-letter code: Small ribosomal subunit protein uS7cz/uS7cy (155 aa).

Component of the chloroplast small ribosomal subunit (SSU). Mature 70S chloroplast ribosomes of higher plants consist of a small (30S) and a large (50S) subunit. The 30S small subunit contains 1 molecule of ribosomal RNA (16S rRNA) and 24 different proteins. The 50S large subunit contains 3 rRNA molecules (23S, 5S and 4.5S rRNA) and 33 different proteins.

Its subcellular location is the plastid. It localises to the chloroplast. Component of the chloroplast ribosome (chloro-ribosome), a dedicated translation machinery responsible for the synthesis of chloroplast genome-encoded proteins, including proteins of the transcription and translation machinery and components of the photosynthetic apparatus. This chain is Small ribosomal subunit protein uS7cz/uS7cy (rps7-A), found in Spinacia oleracea (Spinach).